The following is a 341-amino-acid chain: Alpha-1,4-N-acetylglucosaminyltransferase (341 aa).

Residues methionine 1–glutamate 4 are Cytoplasmic-facing. Residues isoleucine 5 to methionine 25 traverse the membrane as a helical; Signal-anchor for type II membrane protein segment. The Lumenal segment spans residues arginine 26–arginine 341. Asparagine 100 carries N-linked (GlcNAc...) asparagine glycosylation. A DXD motif motif is present at residues aspartate 168 to aspartate 170.

The protein belongs to the glycosyltransferase 32 family.

The protein localises to the golgi apparatus membrane. The protein operates within protein modification; protein glycosylation. Catalyzes the transfer of N-acetylglucosamine (GlcNAc) to core 2 branched O-glycans. Necessary for the synthesis of type III mucin which is specifically produced in the stomach, duodenum, and pancreatic duct. May protect against inflammation-associated gastric adenocarcinoma. The protein is Alpha-1,4-N-acetylglucosaminyltransferase of Mus musculus (Mouse).